Here is a 601-residue protein sequence, read N- to C-terminus: Elongation factor 4 (601 aa).

The 183-residue stretch at 7 to 189 folds into the tr-type G domain; that stretch reads RNIRNFSIIA…AIVHRIPPPK (183 aa). GTP is bound by residues 19–24 and 136–139; these read DHGKST and NKID.

This sequence belongs to the TRAFAC class translation factor GTPase superfamily. Classic translation factor GTPase family. LepA subfamily.

The protein resides in the cell inner membrane. The enzyme catalyses GTP + H2O = GDP + phosphate + H(+). In terms of biological role, required for accurate and efficient protein synthesis under certain stress conditions. May act as a fidelity factor of the translation reaction, by catalyzing a one-codon backward translocation of tRNAs on improperly translocated ribosomes. Back-translocation proceeds from a post-translocation (POST) complex to a pre-translocation (PRE) complex, thus giving elongation factor G a second chance to translocate the tRNAs correctly. Binds to ribosomes in a GTP-dependent manner. The sequence is that of Elongation factor 4 from Xanthomonas axonopodis pv. citri (strain 306).